The sequence spans 946 residues: Probable inactive ATP-dependent zinc metalloprotease FTSHI 1, chloroplastic (946 aa).

The transit peptide at methionine 1–cysteine 54 directs the protein to the chloroplast. The next 3 helical transmembrane spans lie at alanine 289–valine 309, valine 320–leucine 340, and valine 369–leucine 389. An ATP-binding site is contributed by glycine 470 to threonine 477.

The protein in the N-terminal section; belongs to the AAA ATPase family. In the C-terminal section; belongs to the peptidase M41 family. As to quaternary structure, oligomer.

It is found in the plastid. Its subcellular location is the chloroplast inner membrane. Functionally, functions in chloroplast biogenesis and chloroplast division. Required for plastid development during embryogenesis. Might be involved in chaperone functions or play a structural role in the thylakoid FtsH complex. This Arabidopsis thaliana (Mouse-ear cress) protein is Probable inactive ATP-dependent zinc metalloprotease FTSHI 1, chloroplastic.